Reading from the N-terminus, the 55-residue chain is uncharacterized protein (55 aa).

The disordered stretch occupies residues 1–22; sequence MPALKSHVRPNSAAPARRQPWP.

This is an uncharacterized protein from Rhodobacter capsulatus (Rhodopseudomonas capsulata).